Reading from the N-terminus, the 1044-residue chain is Translation initiation factor IF-2 (1044 aa).

Residues 55 to 458 (EAQEGQGAGK…KRKASAQERR (404 aa)) are disordered. Residues 57 to 77 (QEGQGAGKSAAKSAKPAAQPK) are compositionally biased toward low complexity. Residues 104–146 (LSEKRERRPLTERRPLAERRPLAERPLVDRPVTERPLAERPAA) are compositionally biased toward basic and acidic residues. Composition is skewed to low complexity over residues 147–168 (ELRPGAAKAAAPARPAAEAQPV), 190–231 (KAQP…QKPA), and 254–265 (ASSRPASAAPAA). A compositionally biased stretch (basic and acidic residues) spans 267 to 281 (GEKRPAAAAERREEP). 2 stretches are compositionally biased toward low complexity: residues 352-375 (AAGQGTAARAGGLGLPQKPKAGAP) and 383-395 (APQRPGRRGAPLA). The span at 399–444 (LDPKVAEQAKAGEGKPRYGQSGDKRRADLYDRREHPSSQPSEEKLF) shows a compositional bias: basic and acidic residues. The tr-type G domain occupies 546–714 (PRHPVVTIMG…ILVLAEVSDL (169 aa)). The tract at residues 555-562 (GHVDHGKT) is G1. 555 to 562 (GHVDHGKT) is a GTP binding site. The interval 580 to 584 (GITQH) is G2. The interval 601–604 (DTPG) is G3. GTP-binding positions include 601 to 605 (DTPGH) and 655 to 658 (NKID). Positions 655–658 (NKID) are G4. The tract at residues 691-693 (SAK) is G5.

This sequence belongs to the TRAFAC class translation factor GTPase superfamily. Classic translation factor GTPase family. IF-2 subfamily.

The protein localises to the cytoplasm. One of the essential components for the initiation of protein synthesis. Protects formylmethionyl-tRNA from spontaneous hydrolysis and promotes its binding to the 30S ribosomal subunits. Also involved in the hydrolysis of GTP during the formation of the 70S ribosomal complex. This chain is Translation initiation factor IF-2, found in Symbiobacterium thermophilum (strain DSM 24528 / JCM 14929 / IAM 14863 / T).